The sequence spans 123 residues: Ribosome-binding factor A (123 aa).

This sequence belongs to the RbfA family. Monomer. Binds 30S ribosomal subunits, but not 50S ribosomal subunits or 70S ribosomes.

The protein resides in the cytoplasm. One of several proteins that assist in the late maturation steps of the functional core of the 30S ribosomal subunit. Associates with free 30S ribosomal subunits (but not with 30S subunits that are part of 70S ribosomes or polysomes). Required for efficient processing of 16S rRNA. May interact with the 5'-terminal helix region of 16S rRNA. This is Ribosome-binding factor A from Desulfatibacillum aliphaticivorans.